A 513-amino-acid chain; its full sequence is Cyclin-dependent kinase C-2 (513 aa).

Residues 26–325 (FEKLEQIGEG…AKDALDAEYF (300 aa)) enclose the Protein kinase domain. Residues 32-40 (IGEGTYGQV) and K55 contribute to the ATP site. A Phosphotyrosine modification is found at Y37. Residue D164 is the Proton acceptor of the active site. Position 198 is a phosphothreonine (T198). Positions 337-513 (LPTYESSHEF…ARNQQYGWQP (177 aa)) are disordered. Residues 395–404 (AGPNHPMNNN) are compositionally biased toward low complexity. Polar residues predominate over residues 434-448 (SGNQTGGYNNQSRGG). 2 stretches are compositionally biased toward gly residues: residues 461–476 (APYG…GYGV) and 483–496 (QGGG…GSGR).

The protein belongs to the protein kinase superfamily. CMGC Ser/Thr protein kinase family. CDC2/CDKX subfamily. As to quaternary structure, interacts with CYCT1-3. In terms of tissue distribution, highly expressed in flowers. Expressed in seedlings, roots, rosettes and stems.

The catalysed reaction is L-seryl-[protein] + ATP = O-phospho-L-seryl-[protein] + ADP + H(+). The enzyme catalyses L-threonyl-[protein] + ATP = O-phospho-L-threonyl-[protein] + ADP + H(+). It catalyses the reaction [DNA-directed RNA polymerase] + ATP = phospho-[DNA-directed RNA polymerase] + ADP + H(+). The protein is Cyclin-dependent kinase C-2 (CDKC-2) of Arabidopsis thaliana (Mouse-ear cress).